Consider the following 90-residue polypeptide: U7-theraphotoxin-Hhn1k (90 aa).

Residues 1 to 19 (MKTAIFTVVLALAVFAVLS) form the signal peptide. Positions 20–50 (FGWEANEKALSEEFTELIHEKEAASETEARE) are excised as a propeptide. 2 disulfide bridges follow: Cys51/Cys65 and Cys58/Cys70.

Belongs to the neurotoxin 10 (Hwtx-1) family. 13 (Hntx-13) subfamily. Expressed by the venom gland.

Its subcellular location is the secreted. Its function is as follows. Ion channel inhibitor. This chain is U7-theraphotoxin-Hhn1k, found in Cyriopagopus hainanus (Chinese bird spider).